Consider the following 462-residue polypeptide: Exodeoxyribonuclease 7 large subunit (462 aa).

This sequence belongs to the XseA family. Heterooligomer composed of large and small subunits.

Its subcellular location is the cytoplasm. The catalysed reaction is Exonucleolytic cleavage in either 5'- to 3'- or 3'- to 5'-direction to yield nucleoside 5'-phosphates.. Bidirectionally degrades single-stranded DNA into large acid-insoluble oligonucleotides, which are then degraded further into small acid-soluble oligonucleotides. The polypeptide is Exodeoxyribonuclease 7 large subunit (Pectobacterium carotovorum subsp. carotovorum (strain PC1)).